Here is an 804-residue protein sequence, read N- to C-terminus: Lon protease (804 aa).

The segment at 1–23 is disordered; the sequence is MSADSENETSESSPAGEATASTS. A Lon N-terminal domain is found at 30-224; the sequence is LILLPVRNAV…KVLDAVAGRI (195 aa). Residue 376–383 participates in ATP binding; it reads GPPGVGKT. The Lon proteolytic domain maps to 612–793; it reads TSLPGVVTGL…DDAVREIIED (182 aa). Residues serine 699 and lysine 742 contribute to the active site.

It belongs to the peptidase S16 family. As to quaternary structure, homohexamer. Organized in a ring with a central cavity.

It localises to the cytoplasm. The catalysed reaction is Hydrolysis of proteins in presence of ATP.. Functionally, ATP-dependent serine protease that mediates the selective degradation of mutant and abnormal proteins as well as certain short-lived regulatory proteins. Required for cellular homeostasis and for survival from DNA damage and developmental changes induced by stress. Degrades polypeptides processively to yield small peptide fragments that are 5 to 10 amino acids long. Binds to DNA in a double-stranded, site-specific manner. In Paraburkholderia phytofirmans (strain DSM 17436 / LMG 22146 / PsJN) (Burkholderia phytofirmans), this protein is Lon protease.